The primary structure comprises 819 residues: MMNLEKNFDKTTLFNHMRTDKRGKCSDLNEYGTSCDKTTAVEYNKVHMAMTHYECNERGINFSRKSPLTQSQRTITGWSAFESNKCEENFSQSSAHIVHQKTQAGDKFGEHNECTDALYQKLDFTAHQRIHTDFTAHQKFYLSDEHGKCRKSFYWKAHLIQHERPHSGEKTYQYEECAKSFCSSSHPIQHPGTYVGFKLYECNECGKAFCQNSNLSKHLRIHTKEKPCDNNGCGRSYKSPLIGHQKTDAEMELCGGSEYGKTSHLKGHQRILMGEKPYECIECGKTFSKTSHLRAHQRIHTGEKPYECVECEKTFSHKTHLSVHQRVHTGEKPYECNDCGKSFTYNSALRAHQRIHTGEKPYECSDCEKTFAHNSALRAHHRIHTGEKPYECNECGRSFAHISVLKAHQRIHTREKPYECNECGRSFTYNSALRAHQRIHTGRKPYECSDCEKTFAHNSALKIHQRIHTGEKPYKCNECEKTFAHNSALRAHQNIHTGEKLYECSECGKTFFQKTRLSTHRRIHTGEKPYECSKCGKTFSQKSYLSGHERIHTGEKPYECNVCGKTFVYKAALIVHQRIHTGEKPYECNECGKTFSQRTHLCAHQRIHTGEKPYECNECGKTFADNSALRAHHRIHTGEKPYECNDCGKTFSKTSHLRAHLRTRSGEKPYECSECGKTFSEKSYVSAHQRVHTGEKPYECNVCGKPFAHNSTLRVHQRIHTGEKSYECNDCGKTFSQKSHLSAHQRIHTGEKPYECNECGKAFAQNSTLRVHQRIHTGEKPYECDECGKTFVRKAALRVHHTRMHTREKTLACNGFGKS.

The segment at 141–166 (YLSDEHGKCRKSFYWKAHLIQHERPH) adopts a C2H2-type 1; degenerate zinc-finger fold. C2H2-type zinc fingers lie at residues 200–222 (YECN…LRIH), 278–300 (YECI…QRIH), 306–328 (YECV…QRVH), 334–356 (YECN…QRIH), 362–384 (YECS…HRIH), 390–412 (YECN…QRIH), 418–440 (YECN…QRIH), 446–468 (YECS…QRIH), 474–496 (YKCN…QNIH), 502–524 (YECS…RRIH), 530–552 (YECS…ERIH), 558–580 (YECN…QRIH), 586–608 (YECN…QRIH), and 614–636 (YECN…HRIH). The C2H2-type 16; degenerate zinc finger occupies 642–664 (YECNDCGKTFSKTSHLRAHLRTR). C2H2-type zinc fingers lie at residues 670-692 (YECS…QRVH), 698-720 (YECN…QRIH), 726-748 (YECN…QRIH), 754-776 (YECN…QRIH), and 782-805 (YECD…TRMH).

The protein belongs to the krueppel C2H2-type zinc-finger protein family.

Its subcellular location is the nucleus. In terms of biological role, may be involved in transcriptional regulation. This is Zinc finger protein 658B (ZNF658B) from Homo sapiens (Human).